Here is a 187-residue protein sequence, read N- to C-terminus: Elongation factor P (187 aa).

This sequence belongs to the elongation factor P family.

It is found in the cytoplasm. The protein operates within protein biosynthesis; polypeptide chain elongation. Functionally, involved in peptide bond synthesis. Stimulates efficient translation and peptide-bond synthesis on native or reconstituted 70S ribosomes in vitro. Probably functions indirectly by altering the affinity of the ribosome for aminoacyl-tRNA, thus increasing their reactivity as acceptors for peptidyl transferase. This Synechocystis sp. (strain ATCC 27184 / PCC 6803 / Kazusa) protein is Elongation factor P (efp).